The sequence spans 658 residues: Cysteine-rich receptor-like protein kinase 36 (658 aa).

The N-terminal stretch at 1–26 (MERSNLFHIPCFLLLFLLFNINGVHT) is a signal peptide. 2 consecutive Gnk2-homologous domains span residues 27-128 (TFVC…NIHR) and 139-246 (NVPH…DYRF). The Extracellular segment spans residues 27 to 281 (TFVCGDEDFS…KKGRMFQPWS (255 aa)). Asn-38, Asn-64, Asn-116, Asn-150, and Asn-163 each carry an N-linked (GlcNAc...) asparagine glycan. The helical transmembrane segment at 282 to 302 (VVVVVFPTGINLAVFVAFVLA) threads the bilayer. Residues 303–658 (YRRMRRRIYT…EVSITVLYPR (356 aa)) lie on the Cytoplasmic side of the membrane. Positions 340 to 612 (FSLENKLGQG…ITWLARDGTF (273 aa)) constitute a Protein kinase domain. Residues 346–354 (LGQGGFGSV) and Lys-368 each bind ATP. At Tyr-413 the chain carries Phosphotyrosine. The active-site Proton acceptor is the Asp-465. The residue at position 469 (Ser-469) is a Phosphoserine. A Phosphothreonine modification is found at Thr-505. Tyr-513 carries the phosphotyrosine modification.

Belongs to the protein kinase superfamily. Ser/Thr protein kinase family. CRK subfamily. In terms of assembly, interacts with CRK45. Autophosphorylated.

The protein localises to the cell membrane. The catalysed reaction is L-seryl-[protein] + ATP = O-phospho-L-seryl-[protein] + ADP + H(+). It catalyses the reaction L-threonyl-[protein] + ATP = O-phospho-L-threonyl-[protein] + ADP + H(+). Forms a complex with CRK45 that may negatively control abscisic acid (ABA) and osmotic stress signal transduction. Can phosphorylate CRK45 in vitro. The chain is Cysteine-rich receptor-like protein kinase 36 from Arabidopsis thaliana (Mouse-ear cress).